The following is a 240-amino-acid chain: tRNA (guanine-N(1)-)-methyltransferase (240 aa).

S-adenosyl-L-methionine contacts are provided by residues glycine 111 and 130–135; that span reads IGDYVI.

This sequence belongs to the RNA methyltransferase TrmD family. As to quaternary structure, homodimer.

The protein localises to the cytoplasm. The catalysed reaction is guanosine(37) in tRNA + S-adenosyl-L-methionine = N(1)-methylguanosine(37) in tRNA + S-adenosyl-L-homocysteine + H(+). Its function is as follows. Specifically methylates guanosine-37 in various tRNAs. The sequence is that of tRNA (guanine-N(1)-)-methyltransferase from Mycoplasma mycoides subsp. mycoides SC (strain CCUG 32753 / NCTC 10114 / PG1).